The chain runs to 393 residues: S-adenosylmethionine synthase 2 (393 aa).

E9 is a Mg(2+) binding site. H15 contacts ATP. Residue E43 coordinates K(+). L-methionine contacts are provided by E56 and Q99. Residues 167-169, 235-238, D246, 252-253, A269, K273, and K277 each bind ATP; these read DGK, SGRF, and RK. D246 is a binding site for L-methionine. Residue K277 coordinates L-methionine.

The protein belongs to the AdoMet synthase family. As to quaternary structure, homotetramer. It depends on Mn(2+) as a cofactor. The cofactor is Mg(2+). Co(2+) serves as cofactor. Requires K(+) as cofactor.

The protein resides in the cytoplasm. It catalyses the reaction L-methionine + ATP + H2O = S-adenosyl-L-methionine + phosphate + diphosphate. It participates in amino-acid biosynthesis; S-adenosyl-L-methionine biosynthesis; S-adenosyl-L-methionine from L-methionine: step 1/1. Functionally, catalyzes the formation of S-adenosylmethionine from methionine and ATP. The reaction comprises two steps that are both catalyzed by the same enzyme: formation of S-adenosylmethionine (AdoMet) and triphosphate, and subsequent hydrolysis of the triphosphate. May be involved in the synthesis of betain in response to abiotic stress such as high salinity. In Beta vulgaris (Sugar beet), this protein is S-adenosylmethionine synthase 2 (SAMS2).